Reading from the N-terminus, the 156-residue chain is AP-1 complex subunit sigma-1 (156 aa).

The protein belongs to the adaptor complexes small subunit family. Adaptor protein complex 1 (AP-1) is a heterotetramer composed of two large adaptins (gamma-type subunit and beta-type subunit), a medium adaptin (mu-type subunit) and a small adaptin (sigma-type subunit).

Its subcellular location is the golgi apparatus. The protein localises to the trans-Golgi network. It is found in the cytoplasmic vesicle. The protein resides in the clathrin-coated vesicle membrane. Its function is as follows. Subunit of clathrin-associated adaptor protein complex 1 that plays a role in protein sorting in the trans-Golgi network (TGN) and endosomes. The AP complexes mediate the recruitment of clathrin to membranes and the recognition of sorting signals within the cytosolic tails of transmembrane cargo molecules. Also involved in early steps of phagocytosis and macropinocytosis. This Dictyostelium discoideum (Social amoeba) protein is AP-1 complex subunit sigma-1 (ap1s1).